The sequence spans 299 residues: Tricarboxylate transport protein (299 aa).

Solcar repeat units follow at residues 10 to 97 (VDPL…IKDM), 109 to 199 (TRGV…IKTL), and 212 to 297 (LSSG…VLVM). 6 consecutive transmembrane segments (helical) span residues 16–36 (FLAG…FEFA), 66–86 (IGSI…KAGI), 113–133 (IAGL…FEAI), 174–193 (GVLP…LGCY), 215–235 (GLTF…TMPL), and 272–291 (GATP…FTIY).

Belongs to the mitochondrial carrier (TC 2.A.29) family.

The protein localises to the mitochondrion inner membrane. Functionally, transport of citrate across inner mitochondrial membrane. The sequence is that of Tricarboxylate transport protein (CTP1) from Saccharomyces cerevisiae (strain ATCC 204508 / S288c) (Baker's yeast).